We begin with the raw amino-acid sequence, 217 residues long: UPF0173 metal-dependent hydrolase MJ1163 (217 aa).

This sequence belongs to the UPF0173 family.

In Methanocaldococcus jannaschii (strain ATCC 43067 / DSM 2661 / JAL-1 / JCM 10045 / NBRC 100440) (Methanococcus jannaschii), this protein is UPF0173 metal-dependent hydrolase MJ1163.